We begin with the raw amino-acid sequence, 395 residues long: 8-amino-7-oxononanoate synthase (395 aa).

108 to 109 (GF) is a pyridoxal 5'-phosphate binding site. Residue histidine 134 participates in substrate binding. Pyridoxal 5'-phosphate contacts are provided by residues serine 184, 209–212 (DDAH), and 240–243 (TLSK). Lysine 243 is modified (N6-(pyridoxal phosphate)lysine). Threonine 357 is a substrate binding site.

It belongs to the class-II pyridoxal-phosphate-dependent aminotransferase family. BioF subfamily. Homodimer. It depends on pyridoxal 5'-phosphate as a cofactor.

The catalysed reaction is 6-carboxyhexanoyl-[ACP] + L-alanine + H(+) = (8S)-8-amino-7-oxononanoate + holo-[ACP] + CO2. It functions in the pathway cofactor biosynthesis; biotin biosynthesis. In terms of biological role, catalyzes the decarboxylative condensation of pimeloyl-[acyl-carrier protein] and L-alanine to produce 8-amino-7-oxononanoate (AON), [acyl-carrier protein], and carbon dioxide. In Fervidobacterium nodosum (strain ATCC 35602 / DSM 5306 / Rt17-B1), this protein is 8-amino-7-oxononanoate synthase.